The primary structure comprises 1134 residues: Ankyrin repeat and SAM domain-containing protein 1A (1134 aa).

Position 2 is an N-acetylglycine (Gly2). Positions 33-55 (GGGGGGGSGGGGGGSGGGGGGLG) are enriched in gly residues. Residues 33–57 (GGGGGGGSGGGGGGSGGGGGGLGSS) form a disordered region. ANK repeat units follow at residues 79–108 (TGYTPLHHAALNGHKDVVEVLLRNDALTNV), 112–141 (KGCYPLHLAAWKGDAQIVRLLIHQGPSHTR), 148–177 (DNETALHCAAQYGHTEVVKVLLEELTDPTM), 181–210 (KFETPLDLAALYGRLEVVKMLLNAHPNLLS), 214–243 (KKHTPLHLAARNGHKAVVQVLLDAGMDSNY), and 246–275 (EMGSALHEAALFGKTDVVQILLAAGTDVNI). Basic and acidic residues predominate over residues 305–317 (HMTGKRSTKEVDK). 3 disordered regions span residues 305-338 (HMTGKRSTKEVDKTPPPQPPLISSMDSISQKSQG), 375-422 (SMAS…EEDH), and 469-498 (VDGKTKDHRRSSSSRSQDSAEGQDGQVPEQ). Thr318 carries the post-translational modification Phosphothreonine. A compositionally biased stretch (polar residues) spans 328-337 (SMDSISQKSQ). A compositionally biased stretch (basic and acidic residues) spans 382–392 (SDQDSTNKEAE). Ser507 is subject to Phosphoserine. The tract at residues 569-650 (LTGLPTTNSR…MGSRSESLSN (82 aa)) is disordered. A compositionally biased stretch (polar residues) spans 572 to 588 (LPTTNSRSHPETLTHTA). Residues 613–628 (PKAELKLSRSLSKSDS) show a composition bias toward basic and acidic residues. Residues Ser620, Ser622, Ser624, Ser626, Ser628, Ser647, Ser661, Ser663, Ser666, and Ser677 each carry the phosphoserine modification. Polar residues predominate over residues 633–650 (CSPTEDATMGSRSESLSN). SAM domains lie at 696-762 (TLEQ…LPKV) and 770-837 (NSPP…YEEP). Positions 856–868 (TSSPLSQNDSCTG) are enriched in polar residues. Disordered stretches follow at residues 856-896 (TSSP…APSR) and 1079-1134 (AEMI…LSTN). Residue Ser887 is modified to Phosphoserine. A PID domain is found at 936-1091 (IFESCGYEAN…IETKSSKPVP (156 aa)). Positions 1123–1134 (PKPDSKRSLSTN) are enriched in basic and acidic residues.

Interacts (via SAM domain) with EPHA2 (via SAM domain). Interacts with EPHA8; EPHA8 kinase activity-independent but stimulated by EPHA8 ubiquitination. Interacts (via SAM domain) with EPHA6 (via SAM domain). Post-translationally, phosphorylated on tyrosine residues in response to EGF and PDGF. In terms of tissue distribution, widely expressed (at protein level).

The protein resides in the cytoplasm. The protein localises to the cell projection. Regulator of different signaling pathways. Regulates EPHA8 receptor tyrosine kinase signaling to control cell migration and neurite retraction. In Homo sapiens (Human), this protein is Ankyrin repeat and SAM domain-containing protein 1A (ANKS1A).